The sequence spans 233 residues: Hydroxyacylglutathione hydrolase (233 aa).

Residues His-52, His-54, Asp-56, His-57, His-108, Asp-125, and His-163 each coordinate Zn(2+).

Belongs to the metallo-beta-lactamase superfamily. Glyoxalase II family. In terms of assembly, monomer. It depends on Zn(2+) as a cofactor.

It catalyses the reaction an S-(2-hydroxyacyl)glutathione + H2O = a 2-hydroxy carboxylate + glutathione + H(+). The protein operates within secondary metabolite metabolism; methylglyoxal degradation; (R)-lactate from methylglyoxal: step 2/2. Thiolesterase that catalyzes the hydrolysis of S-D-lactoyl-glutathione to form glutathione and D-lactic acid. The protein is Hydroxyacylglutathione hydrolase of Actinobacillus succinogenes (strain ATCC 55618 / DSM 22257 / CCUG 43843 / 130Z).